The following is a 1402-amino-acid chain: Eukaryotic translation initiation factor 4 gamma 1 (1402 aa).

Disordered stretches follow at residues 1 to 123 (MSGA…SPEP) and 165 to 402 (HEPN…YEYK). 2 positions are modified to phosphothreonine: threonine 11 and threonine 27. Residues 53–64 (GPEHSPSESQPS) show a composition bias toward low complexity. Residues 65–76 (SPSPTPSPPPIL) are compositionally biased toward pro residues. Serine 120 carries the post-translational modification Phosphoserine. Positions 238-251 (ASATPPAVPSATPA) are enriched in low complexity. The segment covering 261–275 (QEEEGEEEEEEEEGE) has biased composition (acidic residues). 2 stretches are compositionally biased toward basic and acidic residues: residues 280-290 (ESDKGGEDLHP) and 324-340 (KELN…DAFK). Low complexity predominate over residues 359–370 (PTPESEGSSGPS). A compositionally biased stretch (basic and acidic residues) spans 379–388 (WDAKEDKIHN). At threonine 452 the chain carries Phosphothreonine. 4 disordered regions span residues 476–517 (ANLG…PPKG), 536–563 (AEKA…GSKT), 600–636 (SKGS…ATTE), and 828–1028 (MAKG…KREA). Residues 479-488 (GRPALSSRGP) are compositionally biased toward low complexity. Omega-N-methylarginine occurs at positions 490 and 499. Over residues 547-563 (TAADKDRGEEDADGSKT) the composition is skewed to basic and acidic residues. Positions 567 to 793 (FRRVRSILNK…QDVLDLRQSN (227 aa)) constitute an MIF4G domain. Polar residues predominate over residues 602–621 (GSLTSSLRRPFQNPTSQWPS). Serine 832 carries the post-translational modification Phosphoserine. Residues arginine 836 and arginine 846 each carry the omega-N-methylarginine modification. 2 positions are modified to phosphoserine: serine 881 and serine 896. The span at 892–913 (GGRLSWGKGSSGSGAKPSDAAS) shows a compositional bias: low complexity. Lysine 899 bears the N6-acetyllysine mark. Residues 918 to 937 (PATSTLNRFSALQQAVPTES) show a composition bias toward polar residues. 2 positions are modified to phosphoserine: serine 948 and serine 950. The span at 949-981 (LSRERGGKAGEPRRRLERSERGGDRGDRLDRAR) shows a compositional bias: basic and acidic residues. Residue serine 988 is modified to Phosphoserine; by PKC/PRKCA. The span at 989-1028 (FSKEVEERSRERPSQPEGLRKAASLTEDRDRGRDAAKREA) shows a compositional bias: basic and acidic residues. 3 positions are modified to phosphoserine: serine 990, serine 997, and serine 1012. Threonine 1014 is modified (phosphothreonine). A phosphoserine mark is found at serine 1034 and serine 1041. The MI domain maps to 1044-1166 (ELEKKSKAII…PMGELFREIT (123 aa)). A W2 domain is found at 1231–1401 (EESEAPGQRA…REVEEEESDH (171 aa)). A Phosphoserine modification is found at serine 1399.

Belongs to the eukaryotic initiation factor 4G family. As to quaternary structure, eIF4F is a multi-subunit complex, the composition of which varies with external and internal environmental conditions. It is composed of at least EIF4A, EIF4E (cap-binding) and EIF4G1/EIF4G3. Interacts with eIF3 complex, mutually exclusive with EIF4A1 or EIF4A2, EIF4E and through its N-terminus with PABPC1. Interacts with EIF4E or with EIF1 (mutually exclusive) through a common binding site. Interacts through its C-terminus with the serine/threonine kinases MKNK1, and with MKNK2. Appears to act as a scaffold protein, holding these enzymes in place to phosphorylate EIF4E. Non-phosphorylated EIF4EBP1 competes with EIF4G1/EIF4G3 to interact with EIF4E; insulin stimulated MAP-kinase (MAPK1 and MAPK3) phosphorylation of EIF4EBP1 causes dissociation of the complex allowing EIF4G1/EIF4G3 to bind and consequent initiation of translation. EIF4G1/EIF4G3 interacts with PABPC1 to bring about circularization of the mRNA. Interacts with EIF4E3. Interacts with CIRBP and MIF4GD. Interacts with RBM4. Interacts with HNRNPD/AUF1; the interaction requires RNA. Interacts with DDX3X; the interaction requires RNA. Interacts with DAZAP2. Post-translationally, phosphorylated at multiple sites in vivo. Phosphorylation at Ser-988 by PRKCA induces binding to MKNK1.

It is found in the cytoplasm. The protein resides in the nucleus. Its subcellular location is the stress granule. Component of the protein complex eIF4F, which is involved in the recognition of the mRNA cap, ATP-dependent unwinding of 5'-terminal secondary structure and recruitment of mRNA to the ribosome. Exists in two complexes, either with EIF1 or with EIF4E (mutually exclusive). Together with EIF1, is required for leaky scanning, in particular for avoiding cap-proximal start codon. Together with EIF4E, antagonizes the scanning promoted by EIF1-EIF4G1 and locates the start codon (through a TISU element) without scanning. As a member of the eIF4F complex, required for endoplasmic reticulum stress-induced ATF4 mRNA translation. The sequence is that of Eukaryotic translation initiation factor 4 gamma 1 (EIF4G1) from Oryctolagus cuniculus (Rabbit).